The following is a 44-amino-acid chain: Somatoliberin (44 aa).

Position 44 is a leucine amide (L44).

This sequence belongs to the glucagon family.

It is found in the secreted. Its function is as follows. GRF is released by the hypothalamus and acts on the adenohypophyse to stimulate the secretion of growth hormone. The polypeptide is Somatoliberin (GHRH) (Ovis aries (Sheep)).